Consider the following 483-residue polypeptide: Glutamyl-tRNA(Gln) amidotransferase subunit A (483 aa).

Active-site charge relay system residues include lysine 76 and serine 151. Serine 175 (acyl-ester intermediate) is an active-site residue.

It belongs to the amidase family. GatA subfamily. Heterotrimer of A, B and C subunits.

It catalyses the reaction L-glutamyl-tRNA(Gln) + L-glutamine + ATP + H2O = L-glutaminyl-tRNA(Gln) + L-glutamate + ADP + phosphate + H(+). Its function is as follows. Allows the formation of correctly charged Gln-tRNA(Gln) through the transamidation of misacylated Glu-tRNA(Gln) in organisms which lack glutaminyl-tRNA synthetase. The reaction takes place in the presence of glutamine and ATP through an activated gamma-phospho-Glu-tRNA(Gln). The sequence is that of Glutamyl-tRNA(Gln) amidotransferase subunit A from Coxiella burnetii (strain CbuK_Q154) (Coxiella burnetii (strain Q154)).